The chain runs to 327 residues: Phenylalanine--tRNA ligase alpha subunit (327 aa).

Residue Glu-253 coordinates Mg(2+).

This sequence belongs to the class-II aminoacyl-tRNA synthetase family. Phe-tRNA synthetase alpha subunit type 1 subfamily. In terms of assembly, tetramer of two alpha and two beta subunits. Mg(2+) is required as a cofactor.

The protein resides in the cytoplasm. It carries out the reaction tRNA(Phe) + L-phenylalanine + ATP = L-phenylalanyl-tRNA(Phe) + AMP + diphosphate + H(+). The protein is Phenylalanine--tRNA ligase alpha subunit of Laribacter hongkongensis (strain HLHK9).